Reading from the N-terminus, the 169-residue chain is Cytochrome c oxidase subunit 4 isoform 1, mitochondrial (169 aa).

The transit peptide at 1 to 22 (MLASRALSLIGKRAISTSVCLR) directs the protein to the mitochondrion. Residues 23–99 (AHGSVVKSED…FAEMNRGTNE (77 aa)) are Mitochondrial matrix-facing. Lysine 29 is subject to N6-acetyllysine; alternate. N6-succinyllysine; alternate is present on lysine 29. Serine 56 and serine 58 each carry phosphoserine. Position 60 is an N6-acetyllysine; alternate (lysine 60). Lysine 60 is subject to N6-succinyllysine; alternate. The residue at position 67 (lysine 67) is an N6-acetyllysine. Residues 100 to 125 (WKTVVGMAMFFIGFTALVLIWEKSYV) traverse the membrane as a helical segment. Residues 126–169 (YGPIPHTFDRDWVAMQTKRMLDMKANPIQGFSAKWDYDKNEWKK) lie on the Mitochondrial intermembrane side of the membrane.

This sequence belongs to the cytochrome c oxidase IV family. In terms of assembly, component of the cytochrome c oxidase (complex IV, CIV), a multisubunit enzyme composed of 14 subunits. The complex is composed of a catalytic core of 3 subunits MT-CO1, MT-CO2 and MT-CO3, encoded in the mitochondrial DNA, and 11 supernumerary subunits COX4I, COX5A, COX5B, COX6A, COX6B, COX6C, COX7A, COX7B, COX7C, COX8 and NDUFA4, which are encoded in the nuclear genome. The complex exists as a monomer or a dimer and forms supercomplexes (SCs) in the inner mitochondrial membrane with NADH-ubiquinone oxidoreductase (complex I, CI) and ubiquinol-cytochrome c oxidoreductase (cytochrome b-c1 complex, complex III, CIII), resulting in different assemblies (supercomplex SCI(1)III(2)IV(1) and megacomplex MCI(2)III(2)IV(2)). Interacts with PHB2; the interaction decreases in absence of SPHK2. Interacts with AFG1L. Interacts with ABCB7; this interaction allows the regulation of cellular iron homeostasis and cellular reactive oxygen species (ROS) levels in cardiomyocytes. Interacts with FLVCR2; this interaction occurs in the absence of heme and is disrupted upon heme binding. Interacts with IRGC.

It is found in the mitochondrion inner membrane. The protein operates within energy metabolism; oxidative phosphorylation. Component of the cytochrome c oxidase, the last enzyme in the mitochondrial electron transport chain which drives oxidative phosphorylation. The respiratory chain contains 3 multisubunit complexes succinate dehydrogenase (complex II, CII), ubiquinol-cytochrome c oxidoreductase (cytochrome b-c1 complex, complex III, CIII) and cytochrome c oxidase (complex IV, CIV), that cooperate to transfer electrons derived from NADH and succinate to molecular oxygen, creating an electrochemical gradient over the inner membrane that drives transmembrane transport and the ATP synthase. Cytochrome c oxidase is the component of the respiratory chain that catalyzes the reduction of oxygen to water. Electrons originating from reduced cytochrome c in the intermembrane space (IMS) are transferred via the dinuclear copper A center (CU(A)) of subunit 2 and heme A of subunit 1 to the active site in subunit 1, a binuclear center (BNC) formed by heme A3 and copper B (CU(B)). The BNC reduces molecular oxygen to 2 water molecules using 4 electrons from cytochrome c in the IMS and 4 protons from the mitochondrial matrix. The polypeptide is Cytochrome c oxidase subunit 4 isoform 1, mitochondrial (Cox4i1) (Mus musculus (Mouse)).